The sequence spans 86 residues: Large ribosomal subunit protein uL24 (86 aa).

This sequence belongs to the universal ribosomal protein uL24 family. As to quaternary structure, part of the 50S ribosomal subunit.

In terms of biological role, one of two assembly initiator proteins, it binds directly to the 5'-end of the 23S rRNA, where it nucleates assembly of the 50S subunit. Functionally, one of the proteins that surrounds the polypeptide exit tunnel on the outside of the subunit. The chain is Large ribosomal subunit protein uL24 from Bdellovibrio bacteriovorus (strain ATCC 15356 / DSM 50701 / NCIMB 9529 / HD100).